We begin with the raw amino-acid sequence, 254 residues long: NFU1 iron-sulfur cluster scaffold homolog, mitochondrial (254 aa).

A mitochondrion-targeting transit peptide spans 1–9; that stretch reads MAATARRGW. A nifU region spans residues 173 to 241; the sequence is IKELLDTRIR…IPEVEGVEQV (69 aa). Residues cysteine 210 and cysteine 213 each contribute to the [4Fe-4S] cluster site.

It belongs to the NifU family. As to quaternary structure, monomer and homohexamer; the apo-NFU1 is a monomer, while the holo-NFU1 is a hexamer composed of a trimer of dimer that is probably linked by some 4Fe-4S cluster. Interacts with HIRA and EPM2A/laforin. Interacts with BOLA3. Interacts with HSPA9. In terms of tissue distribution, ubiquitous. Expression in adult lung is weak compared to fetal lung.

The protein localises to the mitochondrion. It is found in the cytoplasm. It localises to the cytosol. In terms of biological role, iron-sulfur cluster scaffold protein which can assemble [4Fe-4S] clusters and deliver them to target proteins. The protein is NFU1 iron-sulfur cluster scaffold homolog, mitochondrial (NFU1) of Homo sapiens (Human).